We begin with the raw amino-acid sequence, 371 residues long: MKLKSLQLVNFRNYKKLHLEFNGKVNLLVGKNGQGKTNIVESIYMLSFGKSFRTNKDKEMVRFNSENLYIGGSFSKYNKYSLIELIIGKDKKGIRINKVPLQKIQELLGNLNVVIFSPEDLRLVKEGPKERRAFIDKEISQIIPKYYKYLTNYNKTLSQRSRVLKNIHVDEALLDVYDDTLAKYGSYIYILRRDFIKKIANISENMHMNLTNGVERLSIRYKNQINITDEDTIDTVYNKFLAKLSSNRPNDIESKTTRYGIHKDDLNIFINDLDARLFGSQGQQRTASISLKLSEIELIKNEVEEYPVLILDDVFSELDEARQKLLVNNLSNVQMFITSAEVSHKKIFDEKNVTIFNIENGDVISIENGGN.

30–37 (GKNGQGKT) contacts ATP.

This sequence belongs to the RecF family.

It is found in the cytoplasm. Its function is as follows. The RecF protein is involved in DNA metabolism; it is required for DNA replication and normal SOS inducibility. RecF binds preferentially to single-stranded, linear DNA. It also seems to bind ATP. This chain is DNA replication and repair protein RecF, found in Clostridioides difficile (strain 630) (Peptoclostridium difficile).